Here is a 163-residue protein sequence, read N- to C-terminus: Large ribosomal subunit protein uL10 (163 aa).

The protein belongs to the universal ribosomal protein uL10 family. In terms of assembly, part of the ribosomal stalk of the 50S ribosomal subunit. The N-terminus interacts with L11 and the large rRNA to form the base of the stalk. The C-terminus forms an elongated spine to which L12 dimers bind in a sequential fashion forming a multimeric L10(L12)X complex.

In terms of biological role, forms part of the ribosomal stalk, playing a central role in the interaction of the ribosome with GTP-bound translation factors. This is Large ribosomal subunit protein uL10 from Haemophilus influenzae (strain 86-028NP).